Consider the following 312-residue polypeptide: Ribosomal protein uL3 glutamine methyltransferase (312 aa).

This sequence belongs to the protein N5-glutamine methyltransferase family. PrmB subfamily.

The enzyme catalyses L-glutaminyl-[ribosomal protein uL3] + S-adenosyl-L-methionine = N(5)-methyl-L-glutaminyl-[ribosomal protein uL3] + S-adenosyl-L-homocysteine + H(+). Methylates large ribosomal subunit protein uL3 on a specific glutamine residue. The polypeptide is Ribosomal protein uL3 glutamine methyltransferase (Xylella fastidiosa (strain 9a5c)).